Reading from the N-terminus, the 311-residue chain is Methionyl-tRNA formyltransferase (311 aa).

(6S)-5,6,7,8-tetrahydrofolate is bound at residue 110–113 (SLLP).

This sequence belongs to the Fmt family.

The catalysed reaction is L-methionyl-tRNA(fMet) + (6R)-10-formyltetrahydrofolate = N-formyl-L-methionyl-tRNA(fMet) + (6S)-5,6,7,8-tetrahydrofolate + H(+). In terms of biological role, attaches a formyl group to the free amino group of methionyl-tRNA(fMet). The formyl group appears to play a dual role in the initiator identity of N-formylmethionyl-tRNA by promoting its recognition by IF2 and preventing the misappropriation of this tRNA by the elongation apparatus. This Streptococcus thermophilus (strain ATCC BAA-250 / LMG 18311) protein is Methionyl-tRNA formyltransferase.